A 34-amino-acid polypeptide reads, in one-letter code: Photosystem II reaction center protein Psb30 (34 aa).

The helical transmembrane segment at 9–29 (QLIATGTIMLAGPAVIVLLAL) threads the bilayer.

This sequence belongs to the Psb30/Ycf12 family. In terms of assembly, PSII is composed of 1 copy each of membrane proteins PsbA, PsbB, PsbC, PsbD, PsbE, PsbF, PsbH, PsbI, PsbJ, PsbK, PsbL, PsbM, PsbT, PsbX, PsbY, PsbZ, Psb30/Ycf12, peripheral proteins of the oxygen-evolving complex and a large number of cofactors. It forms dimeric complexes.

It localises to the plastid. The protein localises to the chloroplast thylakoid membrane. Its function is as follows. A core subunit of photosystem II (PSII), probably helps stabilize the reaction center. This Phaeodactylum tricornutum (strain CCAP 1055/1) protein is Photosystem II reaction center protein Psb30.